Reading from the N-terminus, the 204-residue chain is N-(5'-phosphoribosyl)anthranilate isomerase (204 aa).

The protein belongs to the TrpF family.

The catalysed reaction is N-(5-phospho-beta-D-ribosyl)anthranilate = 1-(2-carboxyphenylamino)-1-deoxy-D-ribulose 5-phosphate. The protein operates within amino-acid biosynthesis; L-tryptophan biosynthesis; L-tryptophan from chorismate: step 3/5. In Bacillus cereus (strain Q1), this protein is N-(5'-phosphoribosyl)anthranilate isomerase.